Consider the following 273-residue polypeptide: SUMO-1 cysteine protease S273R (273 aa).

Active-site residues include His-168 and Asn-187. Gln-226 provides a ligand contact to substrate. Catalysis depends on Cys-232, which acts as the Nucleophile.

It belongs to the peptidase C63 family.

The protein resides in the host cytoplasm. It localises to the virion. Functionally, cysteine protease that plays several role during infection including processing of the structural polyprotein or inhibition of the host immune response. Catalyzes the maturation of the pp220 and pp62 polyprotein precursors into core-shell proteins. Plays a role in the disruption of host pyroptosis via specific cleavage of gasdermin D/GSDMD. In addition, strongly decreases the host cGAS-STING signaling by targeting IKBKE via its enzymatic activity. Also impairs host FOXJ1-mediated antiviral effect via degradation of FOXJ1. The chain is SUMO-1 cysteine protease S273R from Ornithodoros (relapsing fever ticks).